The sequence spans 94 residues: Pyrimidine/purine nucleoside phosphorylase 2 (94 aa).

It belongs to the nucleoside phosphorylase PpnP family.

The enzyme catalyses a purine D-ribonucleoside + phosphate = a purine nucleobase + alpha-D-ribose 1-phosphate. It catalyses the reaction adenosine + phosphate = alpha-D-ribose 1-phosphate + adenine. It carries out the reaction cytidine + phosphate = cytosine + alpha-D-ribose 1-phosphate. The catalysed reaction is guanosine + phosphate = alpha-D-ribose 1-phosphate + guanine. The enzyme catalyses inosine + phosphate = alpha-D-ribose 1-phosphate + hypoxanthine. It catalyses the reaction thymidine + phosphate = 2-deoxy-alpha-D-ribose 1-phosphate + thymine. It carries out the reaction uridine + phosphate = alpha-D-ribose 1-phosphate + uracil. The catalysed reaction is xanthosine + phosphate = alpha-D-ribose 1-phosphate + xanthine. Its function is as follows. Catalyzes the phosphorolysis of diverse nucleosides, yielding D-ribose 1-phosphate and the respective free bases. Can use uridine, adenosine, guanosine, cytidine, thymidine, inosine and xanthosine as substrates. Also catalyzes the reverse reactions. The chain is Pyrimidine/purine nucleoside phosphorylase 2 from Psychrobacter arcticus (strain DSM 17307 / VKM B-2377 / 273-4).